The following is a 496-amino-acid chain: Cytochrome f, chloroplastic (496 aa).

Residues 1-149 (MASLQTPVMV…VGAAAGSANA (149 aa)) constitute a chloroplast transit peptide. Heme-binding residues include Tyr-150, Cys-170, Cys-173, and His-174. A helical membrane pass occupies residues 462-481 (VQAFLFFSFTVLATQTLLVV).

The protein belongs to the cytochrome f family. In terms of assembly, interacts with plastocyanin and Rieske iron-sulfur protein. Heme is required as a cofactor.

It localises to the plastid. The protein resides in the chloroplast thylakoid membrane. Its function is as follows. Translocates protons across the thylakoid membrane and transfers electrons from photosystem II to photosystem I. It receives electrons from the Rieske iron-sulfur protein and passes them to plastocyanin. This is Cytochrome f, chloroplastic (petA) from Euglena gracilis.